The chain runs to 692 residues: DNA topoisomerase 4 subunit B (692 aa).

ATP contacts are provided by residues Y53, N93, D120, 162–168, and K393; that span reads GLHGVGI. A Toprim domain is found at 473 to 587; the sequence is AELFIVEGDS…AGHLYLAVPP (115 aa). Residues E479, D552, and D554 each contribute to the Mg(2+) site.

This sequence belongs to the type II topoisomerase family. ParE type 1 subfamily. Heterotetramer composed of ParC and ParE. Mg(2+) serves as cofactor. It depends on Mn(2+) as a cofactor. Ca(2+) is required as a cofactor.

The catalysed reaction is ATP-dependent breakage, passage and rejoining of double-stranded DNA.. Its function is as follows. Topoisomerase IV is essential for chromosome segregation. It relaxes supercoiled DNA. Performs the decatenation events required during the replication of a circular DNA molecule. The polypeptide is DNA topoisomerase 4 subunit B (Bartonella bacilliformis (strain ATCC 35685 / KC583 / Herrer 020/F12,63)).